We begin with the raw amino-acid sequence, 92 residues long: Defensin (92 aa).

Positions 1 to 20 (MKFFVLVAIAFALLACVAQA) are cleaved as a signal peptide. The propeptide occupies 21-52 (QPVSDVDPIPEDHVLVHEDAHQEVLQHSRQKR). 3 disulfides stabilise this stretch: C55–C82, C68–C88, and C72–C90.

This sequence belongs to the invertebrate defensin family. Type 1 subfamily. In terms of tissue distribution, hemolymph (at protein level).

Its subcellular location is the secreted. In terms of biological role, responsible for the anti Gram-positive activity of immune hemolymph. Expressed in the absence of immune challenge during metamorphosis. The protein is Defensin (Def) of Drosophila melanogaster (Fruit fly).